The chain runs to 446 residues: uncharacterized protein (446 aa).

2 positions are modified to phosphoserine: Ser-393 and Ser-397. The disordered stretch occupies residues 411–431 (LSSTERRDLDRVRDKQKKQDQ).

It belongs to the IFRD family.

The protein resides in the cytoplasm. This is an uncharacterized protein from Schizosaccharomyces pombe (strain 972 / ATCC 24843) (Fission yeast).